The sequence spans 327 residues: Mitochondrial coenzyme A transporter SLC25A42 (327 aa).

3 Solcar repeats span residues Lys-34–Leu-120, Leu-132–Leu-217, and Pro-227–Leu-315. A run of 6 helical transmembrane segments spans residues Ile-36–Pro-56, Leu-92–Cys-112, Leu-138–Val-158, Leu-189–Phe-209, Leu-233–Val-253, and Val-296–Leu-316.

The protein belongs to the mitochondrial carrier (TC 2.A.29) family.

It localises to the mitochondrion inner membrane. The catalysed reaction is ADP(out) + CoA(in) = ADP(in) + CoA(out). The enzyme catalyses 3'-dephospho-CoA(in) + ADP(out) = 3'-dephospho-CoA(out) + ADP(in). It catalyses the reaction adenosine 3',5'-bisphosphate(in) + ADP(out) = adenosine 3',5'-bisphosphate(out) + ADP(in). It carries out the reaction AMP(in) + ADP(out) = AMP(out) + ADP(in). The catalysed reaction is dADP(in) + ADP(out) = dADP(out) + ADP(in). The enzyme catalyses ADP(in) + ATP(out) = ADP(out) + ATP(in). Mitochondrial carrier mediating the transport of coenzyme A (CoA) in mitochondria in exchange for intramitochondrial (deoxy)adenine nucleotides and adenosine 3',5'-diphosphate. The sequence is that of Mitochondrial coenzyme A transporter SLC25A42 (slc25a42) from Xenopus tropicalis (Western clawed frog).